Reading from the N-terminus, the 241-residue chain is Leucyl/phenylalanyl-tRNA--protein transferase (241 aa).

This sequence belongs to the L/F-transferase family.

It localises to the cytoplasm. The enzyme catalyses N-terminal L-lysyl-[protein] + L-leucyl-tRNA(Leu) = N-terminal L-leucyl-L-lysyl-[protein] + tRNA(Leu) + H(+). It catalyses the reaction N-terminal L-arginyl-[protein] + L-leucyl-tRNA(Leu) = N-terminal L-leucyl-L-arginyl-[protein] + tRNA(Leu) + H(+). The catalysed reaction is L-phenylalanyl-tRNA(Phe) + an N-terminal L-alpha-aminoacyl-[protein] = an N-terminal L-phenylalanyl-L-alpha-aminoacyl-[protein] + tRNA(Phe). Functionally, functions in the N-end rule pathway of protein degradation where it conjugates Leu, Phe and, less efficiently, Met from aminoacyl-tRNAs to the N-termini of proteins containing an N-terminal arginine or lysine. This is Leucyl/phenylalanyl-tRNA--protein transferase from Neisseria meningitidis serogroup A / serotype 4A (strain DSM 15465 / Z2491).